A 450-amino-acid chain; its full sequence is tRNA modification GTPase MnmE (450 aa).

3 residues coordinate (6S)-5-formyl-5,6,7,8-tetrahydrofolate: Arg-23, Glu-80, and Arg-123. In terms of domain architecture, TrmE-type G spans 219 to 372 (GLHVVLAGQP…LRARLLQMAG (154 aa)). Position 229 (Asn-229) interacts with K(+). Residues 229–234 (NVGKSS), 248–254 (TPIAGTT), and 273–276 (DTAG) each bind GTP. Ser-233 serves as a coordination point for Mg(2+). Residues Thr-248, Ile-250, and Thr-253 each coordinate K(+). Mg(2+) is bound at residue Thr-254. Lys-450 contacts (6S)-5-formyl-5,6,7,8-tetrahydrofolate.

It belongs to the TRAFAC class TrmE-Era-EngA-EngB-Septin-like GTPase superfamily. TrmE GTPase family. As to quaternary structure, homodimer. Heterotetramer of two MnmE and two MnmG subunits. Requires K(+) as cofactor.

Its subcellular location is the cytoplasm. Functionally, exhibits a very high intrinsic GTPase hydrolysis rate. Involved in the addition of a carboxymethylaminomethyl (cmnm) group at the wobble position (U34) of certain tRNAs, forming tRNA-cmnm(5)s(2)U34. This chain is tRNA modification GTPase MnmE, found in Bordetella avium (strain 197N).